A 72-amino-acid polypeptide reads, in one-letter code: uncharacterized protein (72 aa).

A signal peptide spans 1-22 (MQSNFIFATLLVLLSLLTFTYA). At 23–28 (SGSSSM) the chain is on the extracellular side. A helical membrane pass occupies residues 29 to 49 (TSSSMPMFGGAIVAAFAFAIF). The Cytoplasmic segment spans residues 50–72 (SRLAQNFAPRAIFSLLPYHSVSC).

It localises to the membrane. This is an uncharacterized protein from Dictyostelium discoideum (Social amoeba).